The following is a 178-amino-acid chain: Ribosome maturation factor RimM (178 aa).

Residues 100–173 form the PRC barrel domain; that stretch reads ADEYFIHQLY…QIVVRLLPGL (74 aa).

It belongs to the RimM family. Binds ribosomal protein uS19.

It localises to the cytoplasm. Its function is as follows. An accessory protein needed during the final step in the assembly of 30S ribosomal subunit, possibly for assembly of the head region. Essential for efficient processing of 16S rRNA. May be needed both before and after RbfA during the maturation of 16S rRNA. It has affinity for free ribosomal 30S subunits but not for 70S ribosomes. The protein is Ribosome maturation factor RimM of Roseiflexus castenholzii (strain DSM 13941 / HLO8).